The sequence spans 317 residues: Protein IMPACT-B (317 aa).

The 102-residue stretch at 17-118 folds into the RWD domain; the sequence is EEIEALSSIY…EKIREFLTEK (102 aa). Positions 296–317 are disordered; sequence DSTEETSKAGGKSKKPKSKKTK. Residues 306 to 317 are compositionally biased toward basic residues; that stretch reads GKSKKPKSKKTK.

It belongs to the IMPACT family. In terms of assembly, interacts with GCN1; prevents the interaction of GCN1 with EIF2AK4/GCN2 and inhibits EIF2AK4/GCN2 kinase activity. Interaction with RPL39; this interaction occurs in a GCN1-independent manner. Associates with ribosomes; this interaction occurs in a GCN1-independent manner. Associates with actin; this interaction occurs in a GCN1-independent manner.

The protein localises to the cytoplasm. Functionally, translational regulator that ensures constant high levels of translation upon a variety of stress conditions, such as amino acid starvation, UV-C irradiation, proteasome inhibitor treatment and glucose deprivation. Plays a role as a negative regulator of the EIF2AK4/GCN2 kinase activity; impairs GCN1-mediated EIF2AK4/GCN2 activation, and hence EIF2AK4/GCN2-mediated eIF-2-alpha phosphorylation and subsequent down-regulation of protein synthesis. Plays a role in differentiation of neuronal cells by stimulating neurite outgrowth. This is Protein IMPACT-B (impact-B) from Xenopus tropicalis (Western clawed frog).